Here is a 192-residue protein sequence, read N- to C-terminus: MTITISAVILAGGKARRMGGQDKGLQILGKQSLIEHIINRLQPQIHQISINANRNQTEYAKFGFPVFSDELPDFQGPLSGMLTALEKTKSDFILFTPCDTPFFPMNLLDKLKSAVKNDRTLIAYACDEEREHPVFCLMSVQLKEKLRHYLASGERRLLQFMKENGGISVKFTQEEGNFENFNTLDDLKKTVI.

GTP is bound by residues 10–12 (LAG), Lys-23, Asn-51, Asp-69, and Asp-99. Mg(2+) is bound at residue Asp-99.

The protein belongs to the MobA family. In terms of assembly, monomer. The cofactor is Mg(2+).

The protein resides in the cytoplasm. It carries out the reaction Mo-molybdopterin + GTP + H(+) = Mo-molybdopterin guanine dinucleotide + diphosphate. Transfers a GMP moiety from GTP to Mo-molybdopterin (Mo-MPT) cofactor (Moco or molybdenum cofactor) to form Mo-molybdopterin guanine dinucleotide (Mo-MGD) cofactor. The sequence is that of Molybdenum cofactor guanylyltransferase from Haemophilus influenzae (strain ATCC 51907 / DSM 11121 / KW20 / Rd).